Here is an 87-residue protein sequence, read N- to C-terminus: Small ribosomal subunit protein uS15c (87 aa).

It belongs to the universal ribosomal protein uS15 family. In terms of assembly, part of the 30S ribosomal subunit.

The protein resides in the plastid. It is found in the chloroplast. This Nymphaea alba (White water-lily) protein is Small ribosomal subunit protein uS15c (rps15).